A 232-amino-acid chain; its full sequence is Ubiquinone biosynthesis O-methyltransferase (232 aa).

Residues R36, G55, D76, and M120 each coordinate S-adenosyl-L-methionine.

This sequence belongs to the methyltransferase superfamily. UbiG/COQ3 family.

The enzyme catalyses a 3-demethylubiquinol + S-adenosyl-L-methionine = a ubiquinol + S-adenosyl-L-homocysteine + H(+). It carries out the reaction a 3-(all-trans-polyprenyl)benzene-1,2-diol + S-adenosyl-L-methionine = a 2-methoxy-6-(all-trans-polyprenyl)phenol + S-adenosyl-L-homocysteine + H(+). It functions in the pathway cofactor biosynthesis; ubiquinone biosynthesis. Functionally, O-methyltransferase that catalyzes the 2 O-methylation steps in the ubiquinone biosynthetic pathway. The sequence is that of Ubiquinone biosynthesis O-methyltransferase from Burkholderia mallei (strain ATCC 23344).